Consider the following 189-residue polypeptide: Peptidyl-tRNA hydrolase (189 aa).

A tRNA-binding site is contributed by tyrosine 14. Histidine 19 functions as the Proton acceptor in the catalytic mechanism. TRNA is bound by residues tyrosine 64, asparagine 66, and asparagine 112.

The protein belongs to the PTH family. Monomer.

It localises to the cytoplasm. It carries out the reaction an N-acyl-L-alpha-aminoacyl-tRNA + H2O = an N-acyl-L-amino acid + a tRNA + H(+). Functionally, hydrolyzes ribosome-free peptidyl-tRNAs (with 1 or more amino acids incorporated), which drop off the ribosome during protein synthesis, or as a result of ribosome stalling. In terms of biological role, catalyzes the release of premature peptidyl moieties from peptidyl-tRNA molecules trapped in stalled 50S ribosomal subunits, and thus maintains levels of free tRNAs and 50S ribosomes. This chain is Peptidyl-tRNA hydrolase, found in Clostridium botulinum (strain Loch Maree / Type A3).